Reading from the N-terminus, the 122-residue chain is Large ribosomal subunit protein uL14 (122 aa).

This sequence belongs to the universal ribosomal protein uL14 family. In terms of assembly, part of the 50S ribosomal subunit. Forms a cluster with proteins L3 and L19. In the 70S ribosome, L14 and L19 interact and together make contacts with the 16S rRNA in bridges B5 and B8.

Functionally, binds to 23S rRNA. Forms part of two intersubunit bridges in the 70S ribosome. The protein is Large ribosomal subunit protein uL14 of Pseudomonas fluorescens (strain ATCC BAA-477 / NRRL B-23932 / Pf-5).